Here is a 378-residue protein sequence, read N- to C-terminus: GDP-mannose 3,5-epimerase 1 (378 aa).

Residues 36-62 (GAGG…SDWK), aspartate 60, and aspartate 80 each bind NAD(+). Substrate-binding positions include glycine 105 and 145–147 (SAC). NAD(+)-binding residues include tyrosine 175 and lysine 179. The active-site Proton acceptor is the tyrosine 175. Substrate is bound by residues asparagine 204, 217–219 (EKA), lysine 226, 242–244 (QTR), arginine 307, and serine 357.

It belongs to the NAD(P)-dependent epimerase/dehydratase family. As to quaternary structure, homodimer. It depends on NAD(+) as a cofactor.

The enzyme catalyses GDP-alpha-D-mannose = GDP-beta-L-gulose. It catalyses the reaction GDP-beta-L-gulose = GDP-beta-L-galactose. The protein operates within cofactor biosynthesis; L-ascorbate biosynthesis via GDP-alpha-D-mannose pathway; L-ascorbate from GDP-alpha-D-mannose: step 1/5. Catalyzes a reversible epimerization of GDP-D-mannose that precedes the committed step in the biosynthesis of vitamin C (L-ascorbate), resulting in the hydrolysis of the highly energetic glycosyl-pyrophosphoryl linkage. Able to catalyze 2 distinct epimerization reactions and can release both GDP-L-galactose and GDP-L-gulose from GDP-mannose. This Oryza sativa subsp. indica (Rice) protein is GDP-mannose 3,5-epimerase 1.